Here is a 360-residue protein sequence, read N- to C-terminus: UDP-3-O-acylglucosamine N-acyltransferase (360 aa).

His-253 functions as the Proton acceptor in the catalytic mechanism.

Belongs to the transferase hexapeptide repeat family. LpxD subfamily. In terms of assembly, homotrimer.

It catalyses the reaction a UDP-3-O-[(3R)-3-hydroxyacyl]-alpha-D-glucosamine + a (3R)-hydroxyacyl-[ACP] = a UDP-2-N,3-O-bis[(3R)-3-hydroxyacyl]-alpha-D-glucosamine + holo-[ACP] + H(+). It participates in bacterial outer membrane biogenesis; LPS lipid A biosynthesis. Its function is as follows. Catalyzes the N-acylation of UDP-3-O-acylglucosamine using 3-hydroxyacyl-ACP as the acyl donor. Is involved in the biosynthesis of lipid A, a phosphorylated glycolipid that anchors the lipopolysaccharide to the outer membrane of the cell. The chain is UDP-3-O-acylglucosamine N-acyltransferase from Burkholderia multivorans (strain ATCC 17616 / 249).